The primary structure comprises 398 residues: Phosphopentomutase (398 aa).

D13, D290, H295, D331, H332, and H343 together coordinate Mn(2+).

The protein belongs to the phosphopentomutase family. Mn(2+) is required as a cofactor.

The protein localises to the cytoplasm. It catalyses the reaction 2-deoxy-alpha-D-ribose 1-phosphate = 2-deoxy-D-ribose 5-phosphate. It carries out the reaction alpha-D-ribose 1-phosphate = D-ribose 5-phosphate. It functions in the pathway carbohydrate degradation; 2-deoxy-D-ribose 1-phosphate degradation; D-glyceraldehyde 3-phosphate and acetaldehyde from 2-deoxy-alpha-D-ribose 1-phosphate: step 1/2. Its function is as follows. Isomerase that catalyzes the conversion of deoxy-ribose 1-phosphate (dRib-1-P) and ribose 1-phosphate (Rib-1-P) to deoxy-ribose 5-phosphate (dRib-5-P) and ribose 5-phosphate (Rib-5-P), respectively. This chain is Phosphopentomutase, found in Clostridium tetani (strain Massachusetts / E88).